Here is a 545-residue protein sequence, read N- to C-terminus: CTP synthase (545 aa).

The segment at 1–265 is amidoligase domain; that stretch reads MNGIKHIFIT…DKFVIKHLDL (265 aa). S15 lines the CTP pocket. S15 lines the UTP pocket. ATP is bound by residues 16-21 and D73; that span reads SIGKGL. Residues D73 and E141 each coordinate Mg(2+). Residues 148–150, 188–193, and K224 contribute to the CTP site; these read DIE and KTKPTQ. UTP is bound by residues 188-193 and K224; that span reads KTKPTQ. In terms of domain architecture, Glutamine amidotransferase type-1 spans 290 to 534; that stretch reads EIAIIGKYTG…VAAALARKEI (245 aa). G349 lines the L-glutamine pocket. The active-site Nucleophile; for glutamine hydrolysis is C376. L-glutamine-binding positions include 377–380, E400, and R460; that span reads LGMQ. Catalysis depends on residues H507 and E509.

This sequence belongs to the CTP synthase family. As to quaternary structure, homotetramer.

The enzyme catalyses UTP + L-glutamine + ATP + H2O = CTP + L-glutamate + ADP + phosphate + 2 H(+). The catalysed reaction is L-glutamine + H2O = L-glutamate + NH4(+). It carries out the reaction UTP + NH4(+) + ATP = CTP + ADP + phosphate + 2 H(+). It participates in pyrimidine metabolism; CTP biosynthesis via de novo pathway; CTP from UDP: step 2/2. With respect to regulation, allosterically activated by GTP, when glutamine is the substrate; GTP has no effect on the reaction when ammonia is the substrate. The allosteric effector GTP functions by stabilizing the protein conformation that binds the tetrahedral intermediate(s) formed during glutamine hydrolysis. Inhibited by the product CTP, via allosteric rather than competitive inhibition. Functionally, catalyzes the ATP-dependent amination of UTP to CTP with either L-glutamine or ammonia as the source of nitrogen. Regulates intracellular CTP levels through interactions with the four ribonucleotide triphosphates. In Tropheryma whipplei (strain Twist) (Whipple's bacillus), this protein is CTP synthase.